A 207-amino-acid chain; its full sequence is uncharacterized protein (207 aa).

Residues R80, E88, and R148 contribute to the active site.

The protein belongs to the thermonuclease family.

This is an uncharacterized protein from Methanocaldococcus jannaschii (strain ATCC 43067 / DSM 2661 / JAL-1 / JCM 10045 / NBRC 100440) (Methanococcus jannaschii).